The sequence spans 309 residues: Large ribosomal subunit protein mL45 (309 aa).

It belongs to the mitochondrion-specific ribosomal protein mL45 family. In terms of assembly, component of the mitochondrial ribosome large subunit (39S) which comprises a 16S rRNA and about 50 distinct proteins.

The protein localises to the mitochondrion. Component of the mitochondrial large ribosomal subunit (mt-LSU). Within the mitochondrial ribosomes, required to direct the nascent polypeptide toward the tunnel exit and position the exit at a distance from the membrane surface. The chain is Large ribosomal subunit protein mL45 (mrpl45) from Xenopus laevis (African clawed frog).